A 177-amino-acid polypeptide reads, in one-letter code: ATP synthase subunit delta (177 aa).

Belongs to the ATPase delta chain family. F-type ATPases have 2 components, F(1) - the catalytic core - and F(0) - the membrane proton channel. F(1) has five subunits: alpha(3), beta(3), gamma(1), delta(1), epsilon(1). F(0) has three main subunits: a(1), b(2) and c(10-14). The alpha and beta chains form an alternating ring which encloses part of the gamma chain. F(1) is attached to F(0) by a central stalk formed by the gamma and epsilon chains, while a peripheral stalk is formed by the delta and b chains.

It is found in the cell inner membrane. Functionally, f(1)F(0) ATP synthase produces ATP from ADP in the presence of a proton or sodium gradient. F-type ATPases consist of two structural domains, F(1) containing the extramembraneous catalytic core and F(0) containing the membrane proton channel, linked together by a central stalk and a peripheral stalk. During catalysis, ATP synthesis in the catalytic domain of F(1) is coupled via a rotary mechanism of the central stalk subunits to proton translocation. This protein is part of the stalk that links CF(0) to CF(1). It either transmits conformational changes from CF(0) to CF(1) or is implicated in proton conduction. The polypeptide is ATP synthase subunit delta (Aliivibrio fischeri (strain MJ11) (Vibrio fischeri)).